The chain runs to 264 residues: Acyl-[acyl-carrier-protein]--UDP-N-acetylglucosamine O-acyltransferase (264 aa).

Belongs to the transferase hexapeptide repeat family. LpxA subfamily. In terms of assembly, homotrimer.

The protein localises to the cytoplasm. It carries out the reaction a (3R)-hydroxyacyl-[ACP] + UDP-N-acetyl-alpha-D-glucosamine = a UDP-3-O-[(3R)-3-hydroxyacyl]-N-acetyl-alpha-D-glucosamine + holo-[ACP]. The protein operates within glycolipid biosynthesis; lipid IV(A) biosynthesis; lipid IV(A) from (3R)-3-hydroxytetradecanoyl-[acyl-carrier-protein] and UDP-N-acetyl-alpha-D-glucosamine: step 1/6. In terms of biological role, involved in the biosynthesis of lipid A, a phosphorylated glycolipid that anchors the lipopolysaccharide to the outer membrane of the cell. In Leptothrix cholodnii (strain ATCC 51168 / LMG 8142 / SP-6) (Leptothrix discophora (strain SP-6)), this protein is Acyl-[acyl-carrier-protein]--UDP-N-acetylglucosamine O-acyltransferase.